The primary structure comprises 739 residues: Poly(A) polymerase gamma (739 aa).

Lysine 2 is subject to N6-acetyllysine. Serine 23 is subject to Phosphoserine. Residues 99–101 (FGS), threonine 108, 112–114 (DID), aspartate 166, lysine 227, tyrosine 236, and 245–246 (GV) contribute to the ATP site. Aspartate 112, aspartate 114, and aspartate 166 together coordinate Mg(2+). The tract at residues 506–566 (KSLSDVSRSS…PTGEIERSSA (61 aa)) is disordered. Polar residues-rich tracts occupy residues 509-531 (SDVS…TCLD) and 538-556 (SGTP…NPDS). Serine 524 is modified (phosphoserine). Residues serine 602 and serine 651 each carry the phosphoserine modification. Residue threonine 657 is modified to Phosphothreonine. Positions 677–688 (SRAAEDRKRKPM) are enriched in basic and acidic residues. The tract at residues 677–725 (SRAAEDRKRKPMDSIGGESMPIPTIDTARKKRLPSKELPDSSSPVPANN) is disordered. At serine 711 the chain carries Phosphoserine.

The protein belongs to the poly(A) polymerase family. Mg(2+) serves as cofactor. The cofactor is Mn(2+).

It localises to the nucleus. The enzyme catalyses RNA(n) + ATP = RNA(n)-3'-adenine ribonucleotide + diphosphate. Functionally, responsible for the post-transcriptional adenylation of the 3'-terminal of mRNA precursors and several small RNAs including signal recognition particle (SRP) RNA, nuclear 7SK RNA, U2 small nuclear RNA, and ribosomal 5S RNA. In Mus musculus (Mouse), this protein is Poly(A) polymerase gamma (Papolg).